An 81-amino-acid polypeptide reads, in one-letter code: MAKKSTEKTELDFENTLQQLEAIVTRLESGELPLESALEEFERGIKLAHLGQERLQQAEQRIQILLQKSDSAKLSDYQAEE.

It belongs to the XseB family. As to quaternary structure, heterooligomer composed of large and small subunits.

The protein resides in the cytoplasm. The catalysed reaction is Exonucleolytic cleavage in either 5'- to 3'- or 3'- to 5'-direction to yield nucleoside 5'-phosphates.. Its function is as follows. Bidirectionally degrades single-stranded DNA into large acid-insoluble oligonucleotides, which are then degraded further into small acid-soluble oligonucleotides. The chain is Exodeoxyribonuclease 7 small subunit from Pasteurella multocida (strain Pm70).